The sequence spans 272 residues: Phosphatidylglycerol--prolipoprotein diacylglyceryl transferase (272 aa).

7 helical membrane passes run 17 to 37, 59 to 79, 95 to 115, 129 to 149, 176 to 196, 202 to 222, and 237 to 257; these read LAIRWYGLMYLAGFIMFLGFG, MLFFGVLGVILGGRLGYVLFY, WEGGMAFHGGFLGVVVAMWLF, FIAPMIPCGLAAGRIGNFING, SQLYQFAGEGVALFIVLWLFA, MGAVSGVFLIGYGAFRFAAEF, and LSMGQWLSLPMILAGIAMVVW. Arg-142 is an a 1,2-diacyl-sn-glycero-3-phospho-(1'-sn-glycerol) binding site.

It belongs to the Lgt family.

The protein localises to the cell inner membrane. It carries out the reaction L-cysteinyl-[prolipoprotein] + a 1,2-diacyl-sn-glycero-3-phospho-(1'-sn-glycerol) = an S-1,2-diacyl-sn-glyceryl-L-cysteinyl-[prolipoprotein] + sn-glycerol 1-phosphate + H(+). It participates in protein modification; lipoprotein biosynthesis (diacylglyceryl transfer). Its function is as follows. Catalyzes the transfer of the diacylglyceryl group from phosphatidylglycerol to the sulfhydryl group of the N-terminal cysteine of a prolipoprotein, the first step in the formation of mature lipoproteins. This chain is Phosphatidylglycerol--prolipoprotein diacylglyceryl transferase, found in Cupriavidus necator (strain ATCC 17699 / DSM 428 / KCTC 22496 / NCIMB 10442 / H16 / Stanier 337) (Ralstonia eutropha).